Consider the following 159-residue polypeptide: NADH-quinone oxidoreductase subunit B (159 aa).

The [4Fe-4S] cluster site is built by Cys-36, Cys-37, Cys-102, and Cys-132.

Belongs to the complex I 20 kDa subunit family. As to quaternary structure, NDH-1 is composed of 14 different subunits. Subunits NuoB, C, D, E, F, and G constitute the peripheral sector of the complex. It depends on [4Fe-4S] cluster as a cofactor.

The protein localises to the cell inner membrane. The enzyme catalyses a quinone + NADH + 5 H(+)(in) = a quinol + NAD(+) + 4 H(+)(out). NDH-1 shuttles electrons from NADH, via FMN and iron-sulfur (Fe-S) centers, to quinones in the respiratory chain. Couples the redox reaction to proton translocation (for every two electrons transferred, four hydrogen ions are translocated across the cytoplasmic membrane), and thus conserves the redox energy in a proton gradient. The chain is NADH-quinone oxidoreductase subunit B from Paracidovorax citrulli (strain AAC00-1) (Acidovorax citrulli).